The chain runs to 189 residues: GTP cyclohydrolase 1 (189 aa).

Zn(2+)-binding residues include Cys-78, His-81, and Cys-150.

The protein belongs to the GTP cyclohydrolase I family. Homomer.

The catalysed reaction is GTP + H2O = 7,8-dihydroneopterin 3'-triphosphate + formate + H(+). The protein operates within cofactor biosynthesis; 7,8-dihydroneopterin triphosphate biosynthesis; 7,8-dihydroneopterin triphosphate from GTP: step 1/1. In Bacillus anthracis (strain A0248), this protein is GTP cyclohydrolase 1.